The primary structure comprises 72 residues: Small ribosomal subunit protein eS17 (72 aa).

Belongs to the eukaryotic ribosomal protein eS17 family.

This Nanoarchaeum equitans (strain Kin4-M) protein is Small ribosomal subunit protein eS17.